We begin with the raw amino-acid sequence, 428 residues long: Kynureninase (428 aa).

Pyridoxal 5'-phosphate contacts are provided by residues threonine 104, threonine 105, 132 to 135 (FPSD), aspartate 213, histidine 216, and tyrosine 238. Lysine 239 bears the N6-(pyridoxal phosphate)lysine mark. Pyridoxal 5'-phosphate is bound by residues tryptophan 267 and threonine 295.

Belongs to the kynureninase family. As to quaternary structure, homodimer. It depends on pyridoxal 5'-phosphate as a cofactor.

It carries out the reaction L-kynurenine + H2O = anthranilate + L-alanine + H(+). The catalysed reaction is 3-hydroxy-L-kynurenine + H2O = 3-hydroxyanthranilate + L-alanine + H(+). The protein operates within amino-acid degradation; L-kynurenine degradation; L-alanine and anthranilate from L-kynurenine: step 1/1. Its pathway is cofactor biosynthesis; NAD(+) biosynthesis; quinolinate from L-kynurenine: step 2/3. In terms of biological role, catalyzes the cleavage of L-kynurenine (L-Kyn) and L-3-hydroxykynurenine (L-3OHKyn) into anthranilic acid (AA) and 3-hydroxyanthranilic acid (3-OHAA), respectively. The polypeptide is Kynureninase (Bacillus cereus (strain ATCC 14579 / DSM 31 / CCUG 7414 / JCM 2152 / NBRC 15305 / NCIMB 9373 / NCTC 2599 / NRRL B-3711)).